A 264-amino-acid chain; its full sequence is ATP synthase subunit a (264 aa).

5 consecutive transmembrane segments (helical) span residues 39–59 (LDTL…FYIV), 97–117 (VAPL…MDLV), 139–159 (TADP…VIFY), 205–225 (LFGN…LPWW), and 239–259 (LLVI…YISL).

Belongs to the ATPase A chain family. F-type ATPases have 2 components, CF(1) - the catalytic core - and CF(0) - the membrane proton channel. CF(1) has five subunits: alpha(3), beta(3), gamma(1), delta(1), epsilon(1). CF(0) has three main subunits: a(1), b(2) and c(9-12). The alpha and beta chains form an alternating ring which encloses part of the gamma chain. CF(1) is attached to CF(0) by a central stalk formed by the gamma and epsilon chains, while a peripheral stalk is formed by the delta and b chains.

It is found in the cell inner membrane. Functionally, key component of the proton channel; it plays a direct role in the translocation of protons across the membrane. In Coxiella burnetii (strain RSA 331 / Henzerling II), this protein is ATP synthase subunit a.